A 449-amino-acid polypeptide reads, in one-letter code: Na(+)-translocating NADH-quinone reductase subunit A (449 aa).

The protein belongs to the NqrA family. As to quaternary structure, composed of six subunits; NqrA, NqrB, NqrC, NqrD, NqrE and NqrF.

The enzyme catalyses a ubiquinone + n Na(+)(in) + NADH + H(+) = a ubiquinol + n Na(+)(out) + NAD(+). In terms of biological role, NQR complex catalyzes the reduction of ubiquinone-1 to ubiquinol by two successive reactions, coupled with the transport of Na(+) ions from the cytoplasm to the periplasm. NqrA to NqrE are probably involved in the second step, the conversion of ubisemiquinone to ubiquinol. The chain is Na(+)-translocating NADH-quinone reductase subunit A from Actinobacillus pleuropneumoniae serotype 3 (strain JL03).